A 101-amino-acid chain; its full sequence is Enhancer of yellow 2 transcription factor (101 aa).

Belongs to the ENY2 family. In terms of assembly, component of the nuclear pore complex (NPC)-associated AMEX complex (anchoring and mRNA export complex), composed of at least e(y)2 and xmas-2. Component of the SAGA transcription coactivator-HAT complexes, at least composed of Ada2b, e(y)2, Pcaf/Gcn5, Taf10 and Nipped-A/Trrap. Within the SAGA complex, e(y)2, Sgf11, and not/nonstop form an additional subcomplex of SAGA called the DUB module (deubiquitination module). Component of the THO complex, composed of at least e(y)2, HPR1, THO2, THOC5, THOC6 and THOC7. Interacts with e(y)1. Interacts with su(Hw) (via zinc fingers). Interacts with xmas-2; required for localization to the nuclear periphery. Interacts with the nuclear pore complex (NPC).

It localises to the nucleus. The protein localises to the nucleoplasm. It is found in the cytoplasm. Its function is as follows. Involved in mRNA export coupled transcription activation by association with both the AMEX and the SAGA complexes. The SAGA complex is a multiprotein complex that activates transcription by remodeling chromatin and mediating histone acetylation and deubiquitination. Within the SAGA complex, participates in a subcomplex that specifically deubiquitinates histone H2B. The SAGA complex is recruited to specific gene promoters by activators, where it is required for transcription. Required for nuclear receptor-mediated transactivation. Involved in transcription elongation by recruiting the THO complex onto nascent mRNA. The AMEX complex functions in docking export-competent ribonucleoprotein particles (mRNPs) to the nuclear entrance of the nuclear pore complex (nuclear basket). AMEX participates in mRNA export and accurate chromatin positioning in the nucleus by tethering genes to the nuclear periphery. This chain is Enhancer of yellow 2 transcription factor, found in Drosophila simulans (Fruit fly).